The sequence spans 240 residues: UDP-2,3-diacylglucosamine hydrolase (240 aa).

Residues Asp-8, His-10, Asp-41, Asn-79, and His-114 each coordinate Mn(2+). Position 79-80 (79-80 (NR)) interacts with substrate. 5 residues coordinate substrate: Asp-122, Ser-160, Asn-164, Lys-167, and His-195. Mn(2+) is bound by residues His-195 and His-197.

This sequence belongs to the LpxH family. It depends on Mn(2+) as a cofactor.

It localises to the cell inner membrane. It catalyses the reaction UDP-2-N,3-O-bis[(3R)-3-hydroxytetradecanoyl]-alpha-D-glucosamine + H2O = 2-N,3-O-bis[(3R)-3-hydroxytetradecanoyl]-alpha-D-glucosaminyl 1-phosphate + UMP + 2 H(+). Its pathway is glycolipid biosynthesis; lipid IV(A) biosynthesis; lipid IV(A) from (3R)-3-hydroxytetradecanoyl-[acyl-carrier-protein] and UDP-N-acetyl-alpha-D-glucosamine: step 4/6. Hydrolyzes the pyrophosphate bond of UDP-2,3-diacylglucosamine to yield 2,3-diacylglucosamine 1-phosphate (lipid X) and UMP by catalyzing the attack of water at the alpha-P atom. Involved in the biosynthesis of lipid A, a phosphorylated glycolipid that anchors the lipopolysaccharide to the outer membrane of the cell. This chain is UDP-2,3-diacylglucosamine hydrolase, found in Shigella dysenteriae serotype 1 (strain Sd197).